Consider the following 188-residue polypeptide: Protein GrpE (188 aa).

Over residues 1 to 22 the composition is skewed to low complexity; sequence MEENKQNQNLNTEETTEQQTEA. The segment at 1–26 is disordered; it reads MEENKQNQNLNTEETTEQQTEAETVE.

This sequence belongs to the GrpE family. In terms of assembly, homodimer.

Its subcellular location is the cytoplasm. In terms of biological role, participates actively in the response to hyperosmotic and heat shock by preventing the aggregation of stress-denatured proteins, in association with DnaK and GrpE. It is the nucleotide exchange factor for DnaK and may function as a thermosensor. Unfolded proteins bind initially to DnaJ; upon interaction with the DnaJ-bound protein, DnaK hydrolyzes its bound ATP, resulting in the formation of a stable complex. GrpE releases ADP from DnaK; ATP binding to DnaK triggers the release of the substrate protein, thus completing the reaction cycle. Several rounds of ATP-dependent interactions between DnaJ, DnaK and GrpE are required for fully efficient folding. The chain is Protein GrpE from Exiguobacterium sibiricum (strain DSM 17290 / CCUG 55495 / CIP 109462 / JCM 13490 / 255-15).